Here is a 240-residue protein sequence, read N- to C-terminus: BLOC-1-related complex subunit 8 homolog (240 aa).

Disordered regions lie at residues 1–33 and 163–240; these read MSSI…GSHG and KTFS…EKIN. Low complexity-rich tracts occupy residues 7–26 and 163–179; these read SSTG…NNIS and KTFS…QQQQ. The span at 180–190 shows a compositional bias: polar residues; sequence TNLTPSKPTLS. Positions 196-205 are enriched in low complexity; sequence DNNNNNNNLN. Residues 208–240 are compositionally biased toward basic and acidic residues; sequence EKIEKEEKIEKEDEGKEKDEKEKDDKDLNEKIN. Residues 211-239 adopt a coiled-coil conformation; that stretch reads EKEEKIEKEDEGKEKDEKEKDDKDLNEKI.

It belongs to the BORCS8 family.

The protein resides in the lysosome membrane. May participate in the coupling of lysosomes to microtubule plus-end-directed kinesin motor. This Dictyostelium discoideum (Social amoeba) protein is BLOC-1-related complex subunit 8 homolog.